The sequence spans 459 residues: MALTLFDTDEYRPPVWKSYLYQLQQEAPHPRRITCTCEVENRPKYYGREFHGMISREAADQLLIVAEGSYLIRESQRQPGTYTLALRFGSQTRNFRLYYDGKHFVGEKRFESIHDLVTDGLITLYIETKAAEYIAKMTINPIYEHVGYTTLNREPAYKKHMPVLKETHDERDSTGQDGVSEKRLTSLVRRATLKENEQIPKYEKIHNFKVHTFRGPHWCEYCANFMWGLIAQGVKCADCGLNVHKQCSKMVPNDCKPDLKHVKKVYSCDLTTLVKAHTTKRPMVVDMCIREIESRGLNSEGLYRVSGFSDLIEDVKMAFDRDGEKADISVNMYEDINIITGALKLYFRDLPIPLITYDAYPKFIESAKIMDPDEQLETLHEALKLLPPAHCETLRYLMAHLKRVTLHEKENLMNAENLGIVFGPTLMRSPELDAMAALNDIRYQRLVVELLIKNEDILF.

Position 2 is an N-acetylalanine (alanine 2). Positions 49–135 constitute an SH2 domain; it reads EFHGMISREA…IETKAAEYIA (87 aa). Residue threonine 192 is modified to Phosphothreonine. The segment at 205 to 255 adopts a Phorbol-ester/DAG-type zinc-finger fold; sequence IHNFKVHTFRGPHWCEYCANFMWGLIAQGVKCADCGLNVHKQCSKMVPNDC. The region spanning 268–459 is the Rho-GAP domain; that stretch reads CDLTTLVKAH…LLIKNEDILF (192 aa). Position 340 is a phosphothreonine (threonine 340).

Interacts with EPHA4; effector of EPHA4 in axon guidance linking EPHA4 activation to RAC1 regulation. Phosphorylated. Phosphorylation is EPHA4 kinase activity-dependent. In neurons in brain regions that are involved in learning and memory processes.

Functionally, GTPase-activating protein for p21-rac and a phorbol ester receptor. Involved in the assembly of neuronal locomotor circuits as a direct effector of EPHA4 in axon guidance. The polypeptide is N-chimaerin (CHN1) (Homo sapiens (Human)).